The following is a 167-amino-acid chain: Photosystem I assembly protein Ycf3 (167 aa).

TPR repeat units lie at residues 35–68 (AFTY…EIDP), 72–105 (SYIL…NPSL), and 120–153 (GEQA…APGN).

Belongs to the Ycf3 family.

Its subcellular location is the plastid. It localises to the chloroplast thylakoid membrane. Its function is as follows. Essential for the assembly of the photosystem I (PSI) complex. May act as a chaperone-like factor to guide the assembly of the PSI subunits. This Chara vulgaris (Common stonewort) protein is Photosystem I assembly protein Ycf3.